The following is a 253-amino-acid chain: Transcription factor ORG2 (253 aa).

The 53-residue stretch at 71-123 folds into the bHLH domain; sequence VKKLNHNASERDRRKKINTLFSSLRSCLPASDQSKKLSIPETVSKSLKYIPEL.

Homodimer. As to expression, roots.

Its subcellular location is the nucleus. The chain is Transcription factor ORG2 (ORG2) from Arabidopsis thaliana (Mouse-ear cress).